Here is a 308-residue protein sequence, read N- to C-terminus: 4-hydroxyproline 2-epimerase (308 aa).

Cys88 serves as the catalytic Proton acceptor. Substrate is bound by residues 89-90, His208, and Asp232; that span reads GH. The active-site Proton donor is Cys236. 237-238 contributes to the substrate binding site; the sequence is GT.

The protein belongs to the proline racemase family.

It catalyses the reaction trans-4-hydroxy-L-proline = cis-4-hydroxy-D-proline. Its function is as follows. Catalyzes the epimerization of trans-4-hydroxy-L-proline (t4LHyp) to cis-4-hydroxy-D-proline (c4DHyp). Is likely involved in a degradation pathway that converts t4LHyp to alpha-ketoglutarate. Can also catalyze the epimerization of trans-3-hydroxy-L-proline (t3LHyp) to cis-3-hydroxy-D-proline (c3DHyp), albeit with 200-fold lower efficiency. This Pseudomonas putida (strain ATCC 700007 / DSM 6899 / JCM 31910 / BCRC 17059 / LMG 24140 / F1) protein is 4-hydroxyproline 2-epimerase.